The sequence spans 422 residues: MGMTIIEKILARKAGVAEVHAGEIVTVEVDMTVLIDLQFATMWMQPLMINDASKVAIVMDHAVPAPTIKDAAGGPNARKFANDYGIERFYDVGRHGICHQVIAENGLARPGEILACTDSHTCAGGAFNTAARGLGPAEVYSILCTGQTWFQASPTIRYELIGSMPAGVSGKDVFLYIADAFGDATNSNLEYGGPGLASIPLNDRRTIATQGAEISADFSTFAYDDVLAEHFDDLGITSYEPAHADPDAAYAAVREIDLSALAPYVARPGTVSRNGVSVDEVEPRKIDQAFIGSCANGQLDDLRIAAEILRGRRVAPGVRLIVTPASQQVYRDAMRLGYLQDIADAGAVITNSTCGACFGYHMGVVGPGEVCLTSSTRNFTGRMGSTEAEIYMASPATVAASAVAGHITDARKVVAQWLQVSL.

[4Fe-4S] cluster contacts are provided by C294, C354, and C357.

The protein belongs to the aconitase/IPM isomerase family. LeuC type 2 subfamily. Heterodimer of LeuC and LeuD. It depends on [4Fe-4S] cluster as a cofactor.

The enzyme catalyses (2R,3S)-3-isopropylmalate = (2S)-2-isopropylmalate. It participates in amino-acid biosynthesis; L-leucine biosynthesis; L-leucine from 3-methyl-2-oxobutanoate: step 2/4. Its function is as follows. Catalyzes the isomerization between 2-isopropylmalate and 3-isopropylmalate, via the formation of 2-isopropylmaleate. This is 3-isopropylmalate dehydratase large subunit from Mycolicibacterium smegmatis (strain ATCC 700084 / mc(2)155) (Mycobacterium smegmatis).